The following is a 128-amino-acid chain: Sulfurtransferase TusD (128 aa).

Cys-78 acts as the Cysteine persulfide intermediate in catalysis.

The protein belongs to the DsrE/TusD family. In terms of assembly, heterohexamer, formed by a dimer of trimers. The hexameric TusBCD complex contains 2 copies each of TusB, TusC and TusD. The TusBCD complex interacts with TusE.

Its subcellular location is the cytoplasm. Functionally, part of a sulfur-relay system required for 2-thiolation of 5-methylaminomethyl-2-thiouridine (mnm(5)s(2)U) at tRNA wobble positions. Accepts sulfur from TusA and transfers it in turn to TusE. This is Sulfurtransferase TusD from Salmonella dublin (strain CT_02021853).